The sequence spans 349 residues: Palmitoyltransferase PFA5 (349 aa).

The next 2 membrane-spanning stretches (helical) occupy residues 19-39 (LIPF…CHQF) and 57-77 (LIIV…LMLV). Positions 126-176 (IWCSNCQSLKMSRTHHSTKVGYCVPRFDHYCVWIGTVLGRLNYKLFVQFTF) constitute a DHHC domain. The active-site S-palmitoyl cysteine intermediate is the cysteine 156. 2 helical membrane-spanning segments follow: residues 170–190 (LFVQ…ISIA) and 204–224 (VYAV…LFLT).

This sequence belongs to the DHHC palmitoyltransferase family. PFA5 subfamily.

Its subcellular location is the membrane. It carries out the reaction L-cysteinyl-[protein] + hexadecanoyl-CoA = S-hexadecanoyl-L-cysteinyl-[protein] + CoA. This Kluyveromyces lactis (strain ATCC 8585 / CBS 2359 / DSM 70799 / NBRC 1267 / NRRL Y-1140 / WM37) (Yeast) protein is Palmitoyltransferase PFA5 (PFA5).